Here is a 208-residue protein sequence, read N- to C-terminus: Small ribosomal subunit protein uS4 (208 aa).

The region spanning 98–163 (RRLDNVVYRL…KPRFIEIKEK (66 aa)) is the S4 RNA-binding domain.

Belongs to the universal ribosomal protein uS4 family. As to quaternary structure, part of the 30S ribosomal subunit. Contacts protein S5. The interaction surface between S4 and S5 is involved in control of translational fidelity.

Functionally, one of the primary rRNA binding proteins, it binds directly to 16S rRNA where it nucleates assembly of the body of the 30S subunit. In terms of biological role, with S5 and S12 plays an important role in translational accuracy. The polypeptide is Small ribosomal subunit protein uS4 (Caldicellulosiruptor saccharolyticus (strain ATCC 43494 / DSM 8903 / Tp8T 6331)).